The chain runs to 128 residues: GKMNFTDCGHNEIKELSVSNCTGNYCVIHRGKPLTLDAKFDANQDTASVGLVLTAIIDGDIAIDIPGLETNACKLMKCPIRKGEHQELIYNIGEIPDATPEIKAKVKAQLIGEHGVLACGWVDGEVQE.

It belongs to the NPC2 family.

It localises to the secreted. This Glycyphagus domesticus (House itch mite) protein is Mite group 2 allergen Gly d 2.01.